A 946-amino-acid polypeptide reads, in one-letter code: Aminopeptidase N (946 aa).

Residues 1 to 15 (MRLLICLTLLGLVCG) form the signal peptide. Asparagine 60 carries N-linked (GlcNAc...) asparagine glycosylation. Substrate is bound at residue 308-312 (GAMEN). Histidine 344 lines the Zn(2+) pocket. Glutamate 345 functions as the Proton acceptor in the catalytic mechanism. Residues histidine 348 and glutamate 367 each coordinate Zn(2+). Residues asparagine 550 and asparagine 605 are each glycosylated (N-linked (GlcNAc...) asparagine). Cystine bridges form between cysteine 715–cysteine 722 and cysteine 751–cysteine 787.

The protein belongs to the peptidase M1 family. Zn(2+) is required as a cofactor.

The protein resides in the cell membrane. The catalysed reaction is Release of an N-terminal amino acid, Xaa-|-Yaa- from a peptide, amide or arylamide. Xaa is preferably Ala, but may be most amino acids including Pro (slow action). When a terminal hydrophobic residue is followed by a prolyl residue, the two may be released as an intact Xaa-Pro dipeptide.. In Plutella xylostella (Diamondback moth), this protein is Aminopeptidase N (APN1).